The primary structure comprises 603 residues: Nuclear receptor subfamily 2 group C member 1 (603 aa).

Residues 1–178 are required for interaction with KAT2B; that stretch reads MATIEEIAHQ…RLQRCIAFGM (178 aa). The nuclear receptor DNA-binding region spans 110 to 185; that stretch reads FDLCVVCGDK…FGMKQDSVQC (76 aa). NR C4-type zinc fingers lie at residues 113 to 133 and 149 to 173; these read CVVC…CEGC and CRGS…LQRC. Residues S197 and S215 each carry the phosphoserine modification. T220 bears the Phosphothreonine mark. T222 carries the post-translational modification Phosphothreonine; by MAPK1. Residue K250 forms a Glycyl lysine isopeptide (Lys-Gly) (interchain with G-Cter in SUMO2) linkage. Positions 348 to 590 constitute an NR LBD domain; the sequence is GSVHLITGDS…SVIPHILKME (243 aa). S581 carries the phosphoserine; by PKC modification. The interval 584 to 603 is required for interaction with NRIP1; the sequence is PHILKMEPADYNSQIIGHSI. A Glycyl lysine isopeptide (Lys-Gly) (interchain with G-Cter in SUMO2) cross-link involves residue K588.

This sequence belongs to the nuclear hormone receptor family. NR2 subfamily. In terms of assembly, homodimer. Heterodimer; binds DNA as a heterodimer with NR2C2 required for chromatin remodeling and for binding to promoter regions such as globin DR1 repeats. Interacts with NRIP1 (via its LXXLL motifs); the interaction provides corepressor activity. Interacts with HDAC3 (via the DNA-binding domain). Interacts with HDAC4 (via the DNA-binding domain). Interacts with PIAS1; the interaction is required for sumoylation of NR2C1. Interacts with UBE2I; the interaction is required for sumoylation of NR2C1. Interacts with KAT2B; the interaction acts as a corepressor of gene expression. Interacts with ESR1; the interaction prevents homodimerization of ESR1 and suppresses its transcriptional activity and cell growth. Post-translationally, sumoylation requires both PIAS1 and UBE2I. Sumoylation appears to dissociate NR2C1 from the PML nuclear bodies. Enhances the interaction with NRIP1 but inhibits interaction with KAT2B. In proliferating cells, stimulation by all-trans retinoic acid, activation of MAPK1-mediated phosphorylation and recruitment to PML bodies with subsequent sumoylation, suppresses OCT4 expression. Phosphorylated on several serine and threonine residues. Phosphorylation on Thr-222, stimulated by all-trans retinoic acid (atRA) mediates PML location and sumoylation in proliferating cells which then modulates its association with effector molecules, KAT2B and NRIP1. Phosphorylation on Ser-581 by PKC is important for protein stability and function as activator of RARB.

It localises to the nucleus. Its subcellular location is the PML body. Functionally, orphan nuclear receptor. Binds the IR7 element in the promoter of its own gene in an autoregulatory negative feedback mechanism. Primarily repressor of a broad range of genes. Binds to hormone response elements (HREs) consisting of two 5'-AGGTCA-3' half site direct repeat consensus sequences. Together with NR2C2, forms the core of the DRED (direct repeat erythroid-definitive) complex that represses embryonic and fetal globin transcription. Also activator of OCT4 gene expression. May be involved in stem cell proliferation and differentiation. Mediator of retinoic acid-regulated preadipocyte proliferation. This is Nuclear receptor subfamily 2 group C member 1 (NR2C1) from Homo sapiens (Human).